We begin with the raw amino-acid sequence, 143 residues long: 3-hydroxyacyl-[acyl-carrier-protein] dehydratase FabZ (143 aa).

Histidine 49 is an active-site residue.

It belongs to the thioester dehydratase family. FabZ subfamily.

The protein resides in the cytoplasm. It carries out the reaction a (3R)-hydroxyacyl-[ACP] = a (2E)-enoyl-[ACP] + H2O. Involved in unsaturated fatty acids biosynthesis. Catalyzes the dehydration of short chain beta-hydroxyacyl-ACPs and long chain saturated and unsaturated beta-hydroxyacyl-ACPs. This is 3-hydroxyacyl-[acyl-carrier-protein] dehydratase FabZ from Ehrlichia chaffeensis (strain ATCC CRL-10679 / Arkansas).